A 636-amino-acid chain; its full sequence is Transcription termination factor FttA (636 aa).

Positions 3-70 are KHa; it reads SEMLEEIKRT…IIIRSDRSVL (68 aa). A KHb region spans residues 71–138; that stretch reads MDPEKAIRKI…WAPKILRTPP (68 aa). Positions 179-383 are metallo-beta-lactamase N-terminus; that stretch reads WARLTAMGGF…LVMESTYGGH (205 aa). Zn(2+) is bound by residues His242, His244, Asp246, His247, His329, and Asp352. The segment at 384–577 is beta-Casp; sequence EDVQPSRNRA…MNIKTIEGFS (194 aa). The segment at 578–636 is metallo-beta-lactamase C-terminus; it reads GHSDRRQLMEYVKRISPKPEKILLCHGDNYKTLDLASSIYRTYRIETKTPLNLETVRIQ. His603 is a Zn(2+) binding site.

The protein belongs to the metallo-beta-lactamase superfamily. RNA-metabolizing metallo-beta-lactamase-like family. FttA subfamily. As to quaternary structure, homodimer. Interacts with RNA polymerase (RNAP), interacts with the Spt4-Spt5 complex. Does not seem to interact with the RNA degrading exosome. It depends on Zn(2+) as a cofactor.

With respect to regulation, most active at 0.5 M or 0.7 M NaCl, less active at 1.0 M NaCl. Nuclease activity is inhibited by N,N,Tetrakis-(2-pyridylmethyl)-ethylene diamine (TPEN), a specific chelator of zinc ions. In terms of biological role, terminates transcription on the whole genome. Termination is linked to FttA-mediated RNA cleavage and does not require NTP hydrolysis. Cleaves endonucleolytically at the RNA exit channel of RNA polymerase (RNAP); the 5'-3' exonuclease activity of this protein degrades the nascent RNA released from RNAP. Functionally, an RNA nuclease, it bind single-stranded RNA (ssRNA) with a preference for U-rich sequences. This Methanothermobacter thermautotrophicus (strain ATCC 29096 / DSM 1053 / JCM 10044 / NBRC 100330 / Delta H) (Methanobacterium thermoautotrophicum) protein is Transcription termination factor FttA.